We begin with the raw amino-acid sequence, 272 residues long: NH(3)-dependent NAD(+) synthetase (272 aa).

Residue 45 to 52 participates in ATP binding; the sequence is GISGGQDS. D51 contacts Mg(2+). R138 is a deamido-NAD(+) binding site. T158 is an ATP binding site. Residue E163 coordinates Mg(2+). Residues K171 and D178 each coordinate deamido-NAD(+). ATP is bound by residues K187 and T209. 258–259 provides a ligand contact to deamido-NAD(+); sequence HK.

Belongs to the NAD synthetase family. As to quaternary structure, homodimer.

It catalyses the reaction deamido-NAD(+) + NH4(+) + ATP = AMP + diphosphate + NAD(+) + H(+). Its pathway is cofactor biosynthesis; NAD(+) biosynthesis; NAD(+) from deamido-NAD(+) (ammonia route): step 1/1. In terms of biological role, catalyzes the ATP-dependent amidation of deamido-NAD to form NAD. Uses ammonia as a nitrogen source. This is NH(3)-dependent NAD(+) synthetase from Bacillus cereus (strain ATCC 14579 / DSM 31 / CCUG 7414 / JCM 2152 / NBRC 15305 / NCIMB 9373 / NCTC 2599 / NRRL B-3711).